The following is a 118-amino-acid chain: MATQFQGSAIIRLNGKEWPSDNDGTLTPGGKERETVKGSRVYGFSEKPTEAMVECTVFNCAETDVMELQNITNATVEFETDIGQVYLLPGAWTVETGTLSADGKIKLKMASIECKRVQ.

The disordered stretch occupies residues arginine 12 to glutamate 32.

This sequence to phage Mu protein M.

This chain is Mu-like prophage FluMu tail tube protein, found in Haemophilus influenzae (strain ATCC 51907 / DSM 11121 / KW20 / Rd).